Reading from the N-terminus, the 432-residue chain is Adenylosuccinate synthetase (432 aa).

GTP is bound by residues 12–18 (GDEGKGK) and 40–42 (GHT). Asp-13 serves as the catalytic Proton acceptor. Residues Asp-13 and Gly-40 each coordinate Mg(2+). IMP is bound by residues 13-16 (DEGK), 38-41 (NAGH), Thr-129, Arg-143, Gln-224, Thr-239, and Arg-303. His-41 functions as the Proton donor in the catalytic mechanism. Substrate is bound at residue 299-305 (VTTGRRR). Residues Arg-305, 331–333 (KLD), and 413–415 (GVG) each bind GTP.

This sequence belongs to the adenylosuccinate synthetase family. As to quaternary structure, homodimer. The cofactor is Mg(2+).

It localises to the cytoplasm. The catalysed reaction is IMP + L-aspartate + GTP = N(6)-(1,2-dicarboxyethyl)-AMP + GDP + phosphate + 2 H(+). It functions in the pathway purine metabolism; AMP biosynthesis via de novo pathway; AMP from IMP: step 1/2. Functionally, plays an important role in the de novo pathway of purine nucleotide biosynthesis. Catalyzes the first committed step in the biosynthesis of AMP from IMP. In Mycobacterium leprae (strain TN), this protein is Adenylosuccinate synthetase.